The chain runs to 227 residues: uncharacterized protein (227 aa).

Helical transmembrane passes span 13-35 (CVRA…FAFS) and 155-177 (IFFR…MVFL). Residues 192–227 (GDARPRPAGPQGTARSRTDEAQVSPGTPPECPVSVF) form a disordered region. Positions 217-227 (GTPPECPVSVF) are enriched in pro residues.

Its subcellular location is the cell membrane. This is an uncharacterized protein from Treponema pallidum (strain Nichols).